Reading from the N-terminus, the 1020-residue chain is Probable beta-galactosidase B (1020 aa).

The signal sequence occupies residues Met-1–Ala-22. Asn-25 carries N-linked (GlcNAc...) asparagine glycosylation. Tyr-90 provides a ligand contact to substrate. A glycan (N-linked (GlcNAc...) asparagine) is linked at Asn-111. The substrate site is built by Asn-135, Ala-136, and Glu-137. Asn-172 is a glycosylation site (N-linked (GlcNAc...) asparagine). Residue Asn-195 coordinates substrate. Glu-196 serves as the catalytic Proton donor. N-linked (GlcNAc...) asparagine glycans are attached at residues Asn-210 and Asn-251. Tyr-264 serves as a coordination point for substrate. A disulfide bridge links Cys-270 with Cys-323. Residue Asn-271 is glycosylated (N-linked (GlcNAc...) asparagine). The active-site Nucleophile is the Glu-307. A substrate-binding site is contributed by Tyr-372. N-linked (GlcNAc...) asparagine glycosylation is found at Asn-410, Asn-455, Asn-549, Asn-596, Asn-625, Asn-702, Asn-747, Asn-785, Asn-819, Asn-880, and Asn-919.

The protein belongs to the glycosyl hydrolase 35 family.

Its subcellular location is the secreted. It catalyses the reaction Hydrolysis of terminal non-reducing beta-D-galactose residues in beta-D-galactosides.. Functionally, cleaves beta-linked terminal galactosyl residues from gangliosides, glycoproteins, and glycosaminoglycans. In Aspergillus flavus (strain ATCC 200026 / FGSC A1120 / IAM 13836 / NRRL 3357 / JCM 12722 / SRRC 167), this protein is Probable beta-galactosidase B (lacB).